We begin with the raw amino-acid sequence, 341 residues long: Phenylalanine--tRNA ligase alpha subunit (341 aa).

E256 provides a ligand contact to Mg(2+).

It belongs to the class-II aminoacyl-tRNA synthetase family. Phe-tRNA synthetase alpha subunit type 1 subfamily. In terms of assembly, tetramer of two alpha and two beta subunits. The cofactor is Mg(2+).

Its subcellular location is the cytoplasm. The catalysed reaction is tRNA(Phe) + L-phenylalanine + ATP = L-phenylalanyl-tRNA(Phe) + AMP + diphosphate + H(+). This Clostridium perfringens (strain 13 / Type A) protein is Phenylalanine--tRNA ligase alpha subunit.